Reading from the N-terminus, the 254-residue chain is 3-deoxy-manno-octulosonate cytidylyltransferase (254 aa).

This sequence belongs to the KdsB family.

It is found in the cytoplasm. It catalyses the reaction 3-deoxy-alpha-D-manno-oct-2-ulosonate + CTP = CMP-3-deoxy-beta-D-manno-octulosonate + diphosphate. It functions in the pathway nucleotide-sugar biosynthesis; CMP-3-deoxy-D-manno-octulosonate biosynthesis; CMP-3-deoxy-D-manno-octulosonate from 3-deoxy-D-manno-octulosonate and CTP: step 1/1. Its pathway is bacterial outer membrane biogenesis; lipopolysaccharide biosynthesis. Activates KDO (a required 8-carbon sugar) for incorporation into bacterial lipopolysaccharide in Gram-negative bacteria. This chain is 3-deoxy-manno-octulosonate cytidylyltransferase, found in Porphyromonas gingivalis (strain ATCC BAA-308 / W83).